Consider the following 275-residue polypeptide: uncharacterized protein (275 aa).

The ABC transmembrane type-1 domain maps to 1–162 (NLFSVIVSLI…ITSYWTEVQR (162 aa)). A run of 3 helical transmembrane segments spans residues 21-41 (LYLV…GNIM), 106-126 (IMNL…YYLM), and 137-157 (FAYV…TSYW).

It is found in the cell membrane. This is an uncharacterized protein from Staphylococcus epidermidis.